A 1193-amino-acid polypeptide reads, in one-letter code: MTDQNRKELLHKTGELYKQFIENQDEQRAAKLAAVMKKAADEEVYIAFTGHYSAGKSSLLNCLLMENILPTSPIPTSANLVVIRNGEKRVRLHTTDGACAELEGTYQKDKVQQYCKDGEQIESVEIFDRYTEIDSGVAYIDTPGIDSTDDAHFLSAASILHQADALFYVVHYNHVHAEENVKFLRSIKESIPNVYFIVNQIDRHDETETKFGDYQAQVEEMLCNEGISREALYFTSVTEPDHPFNQMGALREELSRIEQQSKSNMQALTEQKVRNLLKEHTEMLKKDETGAPSFAEQLNIHTGLVQSLRDQLDEAEKQMTEAEKRMQEEINRILKNANLTPFEMRELAAAFLESQEPSFKTGFFFSKAKTAQERDKRRNAFFSDVAKRTEAEADWHMIDTLHKLAKVFDVYTAESEKLIQAYRTPLDISIIEHAVKHGAAFSSEYVLQYTKDLAELIRKEAKREAADIIKVLSAMVKERVSKDVQTINDRLVQESEKLVFLQEQARLENNAREKTDRLWAIWEEESACPMHIDTEWFKSKKTRVAAPEQKQGRSQLTAQPMPKSEIKMEQEMPLQDQIKRFYTLSDILGECSMLLKQTSAFRERVKRLEERKFTLALFGGFSSGKSSFANALVGERVLPSSPTPTTATINKITKPINGNLNKTANVVFKTEDDLTAEILQLTGIPKEPAGRSFTEKWEKAVKKNRLQEEHVKLISNFLLAYEKYQQYIQEQKKLTIPLSELKPYVAEETTACAVKEVTVYYTCPLTEKGITIVDTPGASSMNKRHTELAFQYIKDADAFFYMTYYQHSFSKGDRSFLRKLGLVKESLSMDKMFFIINAADLAKDKTELETVTDYVSAELVKEGVYEPQLFTVSSKEELVGKPESFYNQFSKVRKHLDRFIEVDVKKASAAQLSSEADKLCETVFQLHQSQHQSREEKEAQKQCLMLSFERTAADIEKRRNSKTIIEKVKKDTREQLYHIAQRLSYFANDLLKSAFHPGLQNGDWKKNVSKAMTTALHEYLFEYIQEIKTLDVRMSGFIERHINEEWLDHFQKTLNEDGYFSVYAGDQHSNGIQLKEVEPEIEERAFEQELKEIKSPKQFFEQKGKATFIEAVRMKLTKITEAWIKNEEESLISHYTAHLRRLQEDMGEKAIAQITDQKETYLRGYAEGEHAKEIEMAYQACISWKNSDNTIKM.

The D1, associates with and fuses membranes, tethers lipsomes stretch occupies residues 1 to 609 (MTDQNRKELL…AFRERVKRLE (609 aa)). The tract at residues 50 to 57 (GHYSAGKS) is G1 motif D1. The G2 motif D1 stretch occupies residues 76–78 (TSA). The segment at 141–144 (DTPG) is G3 motif D1. The interval 199-202 (NQID) is G4 motif D1. The D2, does not associate with membranes stretch occupies residues 561–1193 (MPKSEIKMEQ…WKNSDNTIKM (633 aa)). The G1 motif D2 stretch occupies residues 619 to 626 (GGFSSGKS). Residues 645–647 (TTA) are G2 motif D2. The interval 774 to 777 (DTPG) is G3 motif D2. A G4 motif D2 region spans residues 837-840 (NAAD).

This sequence belongs to the TRAFAC class dynamin-like GTPase superfamily. Dynamin/Fzo/YdjA family. In terms of assembly, homodimer in solution. Both D1 and D2 domains interact with YwpG, YneK interacts only with D1 while RNase Y (rny) only interacts with whole protein. Probably oligomerizes at damaged membrane sites. Requires Mg(2+) as cofactor.

The protein resides in the cell membrane. The enzyme catalyses GTP + H2O = GDP + phosphate + H(+). Its function is as follows. Mediates lipid mixing of vesicles and full mixing of their contents in the absence and presence of GTP. Tethers and mixes small vesicles better than larger ones, indicating a curvature preference. GTP slows down DynA-mediated lipid fusion, perhaps controlling its activity. Prefers phospholipid composition close to the B.subtilis membrane; requires phosphatidylglycerol for fusion has no activity on pure phosphatidylethanolamine vesicles. Regulates membrane lipid diffusion. Required to prevent membrane damage when exposed to low levels of membrane-damaging antibiotics or to bacteriophage. Probably surveys the cell membrane for stress; localizes to sites of membrane damage (treatment with nisin) and forms foci in cells treated with pore-forming compounds (CCCP). May assist membrane repair, possibly by membrane tethering and fusion. Probably functions both in early and late cell division, affects the proper formation of the FtsZ ring. Plays a non-redundant role with flottilin (floT) in membrane dynamics and cell shape. Probably able to bend membranes. Tethers liposomes and mediates their fusion; this does not require GTPase activity or the presence of GTP. Both GTPase domains (dynamin-type G) are required for GTPase activity. Functionally, has intrinsic affinity for membranes and membrane distortion capability; causes tubulation and membrane distortion when expressed in a Drosophila cell line. This is Dynamin-like protein A from Bacillus subtilis (strain 168).